Consider the following 362-residue polypeptide: Phospho-2-dehydro-3-deoxyheptonate aldolase (362 aa).

The protein belongs to the class-I DAHP synthase family.

It carries out the reaction D-erythrose 4-phosphate + phosphoenolpyruvate + H2O = 7-phospho-2-dehydro-3-deoxy-D-arabino-heptonate + phosphate. It functions in the pathway metabolic intermediate biosynthesis; chorismate biosynthesis; chorismate from D-erythrose 4-phosphate and phosphoenolpyruvate: step 1/7. In terms of biological role, stereospecific condensation of phosphoenolpyruvate (PEP) and D-erythrose-4-phosphate (E4P) giving rise to 3-deoxy-D-arabino-heptulosonate-7-phosphate (DAHP). This is Phospho-2-dehydro-3-deoxyheptonate aldolase (aroG) from Haemophilus influenzae (strain ATCC 51907 / DSM 11121 / KW20 / Rd).